The chain runs to 507 residues: Cytochrome P450 monooxygenase helB2 (507 aa).

Residues 1-22 form the signal peptide; it reads MALPIILCLAVILWTSWRLLDA. C436 is a binding site for heme.

This sequence belongs to the cytochrome P450 family. It depends on heme as a cofactor.

The protein operates within mycotoxin biosynthesis. Its function is as follows. Cytochrome P450 monooxygenase; part of the gene cluster that mediates the biosynthesis of helvolic acid, an antibacterial nortriterpenoid. Protostadienol synthase helA cyclizes (3S)-oxidosqualene to (17Z)-protosta-17(20),24-dien-3-beta-ol (protostadienol). The synthesis of protostadienol is followed by several steps of monooxygenation, dehydrogenation, and acyl transfer to yield the final helvolic acid. Following the cyclization to the tetracyclic protostadienol by helA, cytochrome P450 monooxygenases helB1-mediated and helB2-mediated oxidation at C-4 and C-16, acyltransferase helD2-dependent acetylation of 16-OH, oxidation of C-21 by cytochrome P450 monooxygenase helB4, and short chain dehydrogenase helC-dependent oxidative decarboxylation yield the fusidane skeleton. This intermediate is further modified in three additional steps mediated by the cytochrome P450 monooxygenase helB3, the acyltransferase helD1, and the 3-ketosteroid 1-dehydrogenase helE to give helvolic acid. Compared with the late stages in the biosynthesis of helvolic acid, enzymes involved in the early stage modifications act in a relatively strict order. The hydroxylation of C-16 by helB1 and subsequent acetylation by helD2 should occur before the helB3-mediated oxidation of C-21. C-4 demethylation in fusidane-type antibiotics proceeds in an unusual manner though it is also achieved by oxidative decarboxylation. The methyl group at C-4 beta position is oxidized by helB1 and subsequently removed by the short chain dehydrogenase helC. This is Cytochrome P450 monooxygenase helB2 from Aspergillus fumigatus (strain ATCC MYA-4609 / CBS 101355 / FGSC A1100 / Af293) (Neosartorya fumigata).